A 257-amino-acid chain; its full sequence is UPF0246 protein Ping_3037 (257 aa).

The protein belongs to the UPF0246 family.

The polypeptide is UPF0246 protein Ping_3037 (Psychromonas ingrahamii (strain DSM 17664 / CCUG 51855 / 37)).